The following is a 727-amino-acid chain: MLPGAARSPCLRFPRRFAHGGLAAPRTALWATAWYGIHSKAFTSANSPLRKDASKEPALASNSKTTNPIPTQASASVNPPKDARNATTAKKDLLSETTLANKEQRKADWAIIKEMAKYLWPKDDWGTKLRVGTALSLLVGAKILNVEVPFYFKSIVDSMNIDFATVGGTAYTVAGSMIIAYGVTRIGATLFQELRNAVFASVAQKAIRRVARNVFEHLLRLDLNFHLSRQTGGLTRAIDRGTKGISFLLTSMVFHVVPTALEISLVCGILTYQYGFQFAAITAATMVAYTAFTITTTAWRTKFRKQANAADNRGATVAVDSLINYEAVKYFNNEQYQVARYDKALKAYEDASIKVTTSLAFLNSGQNMIFSSALAAMMYLAANGVANGNLTVGDLVMVNQLVFQLSVPLNFLGSVYRELRQSLLDMETLFNLQKVNVNIKEKPDAKPLQLHKGGEIRFENVTFGYHPDRPILKNASFTIPAGQKFAIVGPSGCGKSTILRLLFRFYDVQEGRILIDDQDVRDVSLESLRKAIGVVPQDTPLFNDTIAHNIRYGRIDATDEEVHKAAQRARIDALIQKLPEGYQTAVGERGMMISGGEKQRLAISRLILKDPELLFFDEATSALDTYTEQALLQNINSILKEKKRTSVFVAHRLRTIYDSDQILVLKDGRVAEMGSHRELLDLNGIYAELWNAQEMSLAQDLEFERETERDDVESKERDMAPGPKAQQ.

The interval 46-97 (NSPLRKDASKEPALASNSKTTNPIPTQASASVNPPKDARNATTAKKDLLSET) is disordered. The span at 60 to 77 (ASNSKTTNPIPTQASASV) shows a compositional bias: polar residues. Over residues 81–94 (KDARNATTAKKDLL) the composition is skewed to basic and acidic residues. The chain crosses the membrane as a helical span at residues 131 to 152 (VGTALSLLVGAKILNVEVPFYF). Positions 131-421 (VGTALSLLVG…LGSVYRELRQ (291 aa)) constitute an ABC transmembrane type-1 domain. At 153 to 175 (KSIVDSMNIDFATVGGTAYTVAG) the chain is on the mitochondrial intermembrane side. The chain crosses the membrane as a helical span at residues 176–199 (SMIIAYGVTRIGATLFQELRNAVF). The Mitochondrial matrix segment spans residues 200–248 (ASVAQKAIRRVARNVFEHLLRLDLNFHLSRQTGGLTRAIDRGTKGISFL). A helical transmembrane segment spans residues 249–272 (LTSMVFHVVPTALEISLVCGILTY). A topological domain (mitochondrial intermembrane) is located at residue Gln-273. Residues 274–294 (YGFQFAAITAATMVAYTAFTI) traverse the membrane as a helical segment. The Mitochondrial matrix portion of the chain corresponds to 295 to 360 (TTTAWRTKFR…ASIKVTTSLA (66 aa)). Glutathione is bound by residues 300–304 (RTKFR) and 363–366 (NSGQ). Residues 361 to 379 (FLNSGQNMIFSSALAAMMY) form a helical membrane-spanning segment. Residues 380–394 (LAANGVANGNLTVGD) lie on the Mitochondrial intermembrane side of the membrane. A helical membrane pass occupies residues 395 to 416 (LVMVNQLVFQLSVPLNFLGSVY). Residue Gly-413 participates in glutathione binding. Topologically, residues 417-727 (RELRQSLLDM…DMAPGPKAQQ (311 aa)) are mitochondrial matrix. In terms of domain architecture, ABC transporter spans 456–692 (IRFENVTFGY…NGIYAELWNA (237 aa)). Residues Tyr-465 and 489–500 (GPSGCGKSTILR) contribute to the ATP site. A compositionally biased stretch (basic and acidic residues) spans 702 to 719 (EFERETERDDVESKERDM). A disordered region spans residues 702-727 (EFERETERDDVESKERDMAPGPKAQQ).

This sequence belongs to the ABC transporter superfamily. ABCB family. Heavy Metal importer (TC 3.A.1.210) subfamily. Homodimer.

The protein resides in the mitochondrion inner membrane. Its function is as follows. Performs an essential function in the generation of cytoplasmic iron-sulfur proteins by mediating the ATP-dependent export of Fe/S cluster precursors synthesized by nfs1 and other mitochondrial proteins. Hydrolyzes ATP. Binds glutathione and may function by transporting a glutathione-conjugated iron-sulfur compound. The sequence is that of Iron-sulfur clusters transporter atm1, mitochondrial from Aspergillus fumigatus (strain ATCC MYA-4609 / CBS 101355 / FGSC A1100 / Af293) (Neosartorya fumigata).